The chain runs to 988 residues: Ephrin type-B receptor 3 (988 aa).

The interval 1 to 24 is disordered; it reads GVSSRARRPPGSSRSSRRGVTSEL. Residues 1 to 534 are Extracellular-facing; that stretch reads GVSSRARRPP…TSKTFQELPL (534 aa). Residues 11 to 189 enclose the Eph LBD domain; it reads GSSRSSRRGV…FYKKCSNTIA (179 aa). C53 and C171 are oxidised to a cystine. 2 Fibronectin type-III domains span residues 311–424 and 425–522; these read VPSA…TNQA and APSA…TAED. N-linked (GlcNAc...) asparagine glycosylation is found at N323 and N418. Residues 535–555 traverse the membrane as a helical segment; sequence IVGSATAGLLFVIVVVIIAIV. The Cytoplasmic segment spans residues 556 to 988; the sequence is CFRKGMVTEQ…QMNQTLPVQV (433 aa). The residue at position 604 (Y604) is a Phosphotyrosine; by autocatalysis. Residues 623–886 enclose the Protein kinase domain; it reads VKIEEVIGAG…QIVNTLDKLI (264 aa). Residues 629–637 and K655 each bind ATP; that span reads IGAGEFGEV. D748 acts as the Proton acceptor in catalysis. One can recognise an SAM domain in the interval 915–979; it reads TTFTTVGDWL…LSSIQDMRLQ (65 aa). Positions 986–988 match the PDZ-binding motif; sequence VQV.

Belongs to the protein kinase superfamily. Tyr protein kinase family. Ephrin receptor subfamily. Heterotetramer upon binding of the ligand. The heterotetramer is composed of an ephrin dimer and a receptor dimer. Oligomerization is probably required to induce biological responses. Post-translationally, phosphorylated. Autophosphorylates upon ligand-binding. Autophosphorylation on Tyr-604 is required for interaction with SH2 domain-containing proteins. In terms of tissue distribution, present in 10-day embryonic brain and body tissues. Prominent expression in kidney. Lower expression in lung, and barely detectable in brain, liver, heart, skeletal muscle and thymus.

It is found in the cell membrane. It localises to the cell projection. Its subcellular location is the dendrite. The enzyme catalyses L-tyrosyl-[protein] + ATP = O-phospho-L-tyrosyl-[protein] + ADP + H(+). Its function is as follows. Receptor tyrosine kinase which binds promiscuously transmembrane ephrin-B family ligands residing on adjacent cells, leading to contact-dependent bidirectional signaling into neighboring cells. The signaling pathway downstream of the receptor is referred to as forward signaling while the signaling pathway downstream of the ephrin ligand is referred to as reverse signaling. Generally has an overlapping and redundant function with EPHB2. Like EPHB2, functions in axon guidance during development. In addition to its role in axon guidance also plays an important redundant role with other ephrin-B receptors in development and maturation of dendritic spines and the formation of excitatory synapses. May control other aspects of development through regulation of cell migration and positioning. This Gallus gallus (Chicken) protein is Ephrin type-B receptor 3 (EPHB3).